The chain runs to 213 residues: ATP synthase peripheral stalk subunit OSCP, mitochondrial (213 aa).

The N-terminal 23 residues, 1–23, are a transit peptide targeting the mitochondrion; the sequence is MASQAVSGLSRQVRCFSTSVVRP. The SIFI-degron signature appears at 5-23; the sequence is AVSGLSRQVRCFSTSVVRP. N6-acetyllysine is present on residues lysine 54, lysine 60, lysine 70, and lysine 73. Lysine 90 bears the N6-succinyllysine mark. Residues lysine 100, lysine 158, and lysine 162 each carry the N6-acetyllysine; alternate modification. Residues lysine 100, lysine 158, and lysine 162 each carry the N6-succinyllysine; alternate modification. Residues lysine 172, lysine 176, and lysine 192 each carry the N6-acetyllysine modification. Residue lysine 199 is modified to N6-succinyllysine.

This sequence belongs to the ATPase delta chain family. As to quaternary structure, component of the ATP synthase complex composed at least of ATP5F1A/subunit alpha, ATP5F1B/subunit beta, ATP5MC1/subunit c (homooctomer), MT-ATP6/subunit a, MT-ATP8/subunit 8, ATP5ME/subunit e, ATP5MF/subunit f, ATP5MG/subunit g, ATP5MK/subunit k, ATP5MJ/subunit j, ATP5F1C/subunit gamma, ATP5F1D/subunit delta, ATP5F1E/subunit epsilon, ATP5PF/subunit F6, ATP5PB/subunit b, ATP5PD/subunit d, ATP5PO/subunit OSCP. ATP synthase complex consists of a soluble F(1) head domain (subunits alpha(3) and beta(3)) - the catalytic core - and a membrane F(0) domain - the membrane proton channel (subunits c, a, 8, e, f, g, k and j). These two domains are linked by a central stalk (subunits gamma, delta, and epsilon) rotating inside the F1 region and a stationary peripheral stalk (subunits F6, b, d, and OSCP). Acetylation at Lys-162 decreases ATP production. Deacetylated by SIRT3. Post-translationally, in response to mitochondrial stress, the precursor protein is ubiquitinated by the SIFI complex in the cytoplasm before mitochondrial import, leading to its degradation. Within the SIFI complex, UBR4 initiates ubiquitin chain that are further elongated or branched by KCMF1.

The protein resides in the mitochondrion. The protein localises to the mitochondrion inner membrane. Functionally, subunit OSCP, of the mitochondrial membrane ATP synthase complex (F(1)F(0) ATP synthase or Complex V) that produces ATP from ADP in the presence of a proton gradient across the membrane which is generated by electron transport complexes of the respiratory chain. ATP synthase complex consist of a soluble F(1) head domain - the catalytic core - and a membrane F(1) domain - the membrane proton channel. These two domains are linked by a central stalk rotating inside the F(1) region and a stationary peripheral stalk. During catalysis, ATP synthesis in the catalytic domain of F(1) is coupled via a rotary mechanism of the central stalk subunits to proton translocation. In vivo, can only synthesize ATP although its ATP hydrolase activity can be activated artificially in vitro. Part of the complex F(0) domain. Part of the complex F(0) domain and the peripheric stalk, which acts as a stator to hold the catalytic alpha(3)beta(3) subcomplex and subunit a/ATP6 static relative to the rotary elements. The chain is ATP synthase peripheral stalk subunit OSCP, mitochondrial from Sus scrofa (Pig).